A 513-amino-acid polypeptide reads, in one-letter code: V-type proton ATPase subunit B, kidney isoform (513 aa).

An ATP-binding site is contributed by R394. A PDZ-binding motif is present at residues 510-513 (DTAL).

Belongs to the ATPase alpha/beta chains family. As to quaternary structure, V-ATPase is a heteromultimeric enzyme made up of two complexes: the ATP-hydrolytic V1 complex and the proton translocation V0 complex. The V1 complex consists of three catalytic AB heterodimers that form a heterohexamer, three peripheral stalks each consisting of EG heterodimers, one central rotor including subunits D and F, and the regulatory subunits C and H. The proton translocation complex V0 consists of the proton transport subunit a, a ring of proteolipid subunits c9c'', rotary subunit d, subunits e and f, and the accessory subunits ATP6AP1/Ac45 and ATP6AP2/PRR. Forms a complex with NHERF1 and SCL4A7. In terms of tissue distribution, kidney cortex and medulla.

The protein localises to the apical cell membrane. Its subcellular location is the basolateral cell membrane. Functionally, non-catalytic subunit of the V1 complex of vacuolar(H+)-ATPase (V-ATPase), a multisubunit enzyme composed of a peripheral complex (V1) that hydrolyzes ATP and a membrane integral complex (V0) that translocates protons. V-ATPase is responsible for acidifying and maintaining the pH of intracellular compartments and in some cell types, is targeted to the plasma membrane, where it is responsible for acidifying the extracellular environment. Essential for the proper assembly and activity of V-ATPase. In renal intercalated cells, mediates secretion of protons (H+) into the urine thereby ensuring correct urinary acidification. Required for optimal olfactory function by mediating the acidification of the nasal olfactory epithelium. The polypeptide is V-type proton ATPase subunit B, kidney isoform (ATP6V1B1) (Bos taurus (Bovine)).